Consider the following 257-residue polypeptide: Zinc import ATP-binding protein ZnuC (257 aa).

Residues 6 to 221 (IRLDQVGVTF…PAFVELFGKT (216 aa)) form the ABC transporter domain. 38 to 45 (GPNGAGKT) is an ATP binding site.

Belongs to the ABC transporter superfamily. Zinc importer (TC 3.A.1.15.5) family. The complex is composed of two ATP-binding proteins (ZnuC), two transmembrane proteins (ZnuB) and a solute-binding protein (ZnuA).

It localises to the cell inner membrane. The enzyme catalyses Zn(2+)(out) + ATP(in) + H2O(in) = Zn(2+)(in) + ADP(in) + phosphate(in) + H(+)(in). Part of the ABC transporter complex ZnuABC involved in zinc import. Responsible for energy coupling to the transport system. The polypeptide is Zinc import ATP-binding protein ZnuC (Pseudomonas putida (strain ATCC 47054 / DSM 6125 / CFBP 8728 / NCIMB 11950 / KT2440)).